A 210-amino-acid polypeptide reads, in one-letter code: Imidazole glycerol phosphate synthase subunit HisH (210 aa).

Positions 1 to 210 (MIAILDYGMG…KLLENFIRFI (210 aa)) constitute a Glutamine amidotransferase type-1 domain. Cysteine 79 (nucleophile) is an active-site residue. Residues histidine 191 and glutamate 193 contribute to the active site.

Heterodimer of HisH and HisF.

The protein localises to the cytoplasm. The catalysed reaction is 5-[(5-phospho-1-deoxy-D-ribulos-1-ylimino)methylamino]-1-(5-phospho-beta-D-ribosyl)imidazole-4-carboxamide + L-glutamine = D-erythro-1-(imidazol-4-yl)glycerol 3-phosphate + 5-amino-1-(5-phospho-beta-D-ribosyl)imidazole-4-carboxamide + L-glutamate + H(+). It carries out the reaction L-glutamine + H2O = L-glutamate + NH4(+). It participates in amino-acid biosynthesis; L-histidine biosynthesis; L-histidine from 5-phospho-alpha-D-ribose 1-diphosphate: step 5/9. Its function is as follows. IGPS catalyzes the conversion of PRFAR and glutamine to IGP, AICAR and glutamate. The HisH subunit catalyzes the hydrolysis of glutamine to glutamate and ammonia as part of the synthesis of IGP and AICAR. The resulting ammonia molecule is channeled to the active site of HisF. The polypeptide is Imidazole glycerol phosphate synthase subunit HisH (Leptospira interrogans serogroup Icterohaemorrhagiae serovar copenhageni (strain Fiocruz L1-130)).